The following is a 76-amino-acid chain: uncharacterized protein (76 aa).

It to L.innocua lin1255, lin1742 and lin2600.

This is an uncharacterized protein from Listeria innocua serovar 6a (strain ATCC BAA-680 / CLIP 11262).